Reading from the N-terminus, the 418-residue chain is Gamma-glutamyl phosphate reductase (418 aa).

Belongs to the gamma-glutamyl phosphate reductase family.

It is found in the cytoplasm. The catalysed reaction is L-glutamate 5-semialdehyde + phosphate + NADP(+) = L-glutamyl 5-phosphate + NADPH + H(+). The protein operates within amino-acid biosynthesis; L-proline biosynthesis; L-glutamate 5-semialdehyde from L-glutamate: step 2/2. In terms of biological role, catalyzes the NADPH-dependent reduction of L-glutamate 5-phosphate into L-glutamate 5-semialdehyde and phosphate. The product spontaneously undergoes cyclization to form 1-pyrroline-5-carboxylate. The chain is Gamma-glutamyl phosphate reductase from Lacticaseibacillus paracasei (strain ATCC 334 / BCRC 17002 / CCUG 31169 / CIP 107868 / KCTC 3260 / NRRL B-441) (Lactobacillus paracasei).